A 796-amino-acid chain; its full sequence is DnaJ homolog subfamily C member 10 (796 aa).

The N-terminal stretch at 1 to 33 is a signal peptide; it reads MKHSLNTATSSSSVLKRTILYLVLISLAALVYC. Residues 36 to 100 enclose the J domain; that stretch reads DYYDLLGVSK…DLRKKYDKYG (65 aa). The region spanning 131–233 is the Thioredoxin 1 domain; sequence EIITLDRGEF…ERLVNFAMPY (103 aa). An intrachain disulfide couples C159 to C162. Trxb regions lie at residues 236–351 and 349–464; these read STVT…LPDL and PDLE…PTNF. Thioredoxin domains lie at 455 to 554, 558 to 668, and 672 to 780; these read HVIT…IEDL, SVVT…ALMY, and ASFD…ITKR. A disulfide bridge connects residues C481 and C484. A glycan (N-linked (GlcNAc...) asparagine) is linked at N531. Intrachain disulfides connect C589–C592 and C701–C704. N753 is a glycosylation site (N-linked (GlcNAc...) asparagine). Residues 793–796 carry the Prevents secretion from ER motif; that stretch reads KDEL.

It is found in the endoplasmic reticulum lumen. Its function is as follows. Endoplasmic reticulum disulfide reductase involved both in the correct folding of proteins and degradation of misfolded proteins. Required for efficient folding of proteins in the endoplasmic reticulum by catalyzing the removal of non-native disulfide bonds formed during the folding of proteins. Also involved in endoplasmic reticulum-associated degradation (ERAD) by reducing incorrect disulfide bonds in misfolded glycoproteins. This Xenopus laevis (African clawed frog) protein is DnaJ homolog subfamily C member 10 (dnajc10).